Here is a 200-residue protein sequence, read N- to C-terminus: Cytochrome c biogenesis ATP-binding export protein CcmA (200 aa).

Positions 1 to 200 constitute an ABC transporter domain; the sequence is MRLSGRGLRC…TREMRIGAAA (200 aa). Residue 35-42 participates in ATP binding; the sequence is GRNGAGKT.

This sequence belongs to the ABC transporter superfamily. CcmA exporter (TC 3.A.1.107) family. The complex is composed of two ATP-binding proteins (CcmA) and two transmembrane proteins (CcmB).

It is found in the cell inner membrane. The enzyme catalyses heme b(in) + ATP + H2O = heme b(out) + ADP + phosphate + H(+). Functionally, part of the ABC transporter complex CcmAB involved in the biogenesis of c-type cytochromes; once thought to export heme, this seems not to be the case, but its exact role is uncertain. Responsible for energy coupling to the transport system. This chain is Cytochrome c biogenesis ATP-binding export protein CcmA, found in Rhodopseudomonas palustris (strain HaA2).